The chain runs to 250 residues: UPF0736 protein BPUM_1067 (250 aa).

The protein belongs to the UPF0736 family.

The protein is UPF0736 protein BPUM_1067 of Bacillus pumilus (strain SAFR-032).